The following is a 52-amino-acid chain: Eukaryotic translation initiation factor 2 subunit 1 (52 aa).

Positions 16–52 (EDVVMVNVRSIAEMGAYVSLLEYNNIEGRILLSELSR) constitute an S1 motif domain. Serine 48 is subject to Phosphoserine; by HRI. Serine 51 is subject to Phosphoserine.

Belongs to the eIF-2-alpha family. Eukaryotic translation initiation factor 2 eIF2 is a heterotrimeric complex composed of an alpha (EIF2S1), a beta (EIF2S2) and a gamma (EIF2S3) chain. eIF2 is member of the 43S pre-initiation complex (43S PIC). eIF2 forms a complex with at least CELF1/CUGBP1, CALR, CALR3, EIF2S1, EIF2S2, HSP90B1 and HSPA5. Interaction with METAP2 protects EIF2S1 from inhibitory phosphorylation. Interacts with ABCF1. Associates with ribosomes. Interacts with DDX3X in an RNA-independent manner. Post-translationally, phosphorylation at Ser-48 and Ser-51 stabilizes the eIF-2/GDP/eIF2B complex and prevents GDP/GTP exchange reaction, thus impairing the recycling of eIF-2 between successive rounds of initiation and leading to global inhibition of translation, while concomitantly initiating the preferential translation of integrated stress response (ISR)-specific mRNAs. Substrate for at least 4 kinases: EIF2AK1/HRI, EIF2AK2/PKR, EIF2AK3/PERK and EIF2AK4/GCN2. Phosphorylation on Ser-51 by the EIF2AK4/GCN2 protein kinase occurs in response to amino acid starvation and UV irradiation. Phosphorylation at Ser-51 by the EIF2AK3/PERK protein kinase occurs in response to the unfolded protein response. Phosphorylation at Ser-51 by EIF2AK1/HRI in response to mitochondrial damage promotes relocalization to the mitochondrial surface.

It localises to the cytoplasm. The protein localises to the stress granule. Its subcellular location is the cytosol. The protein resides in the mitochondrion. With respect to regulation, activity is regulated by phosphorylation at Ser-49 and Ser-52, which stabilizes the eIF2/GDP/eIF2B complex and prevents the eIF2B-mediated exchange of GDP for GTP, thereby preventing the formation of the 43S pre-initiation complex (43S PIC). This results in the global attenuation of 5' cap-dependent protein synthesis and concomitant translation of ISR-specific mRNAs that contain a short upstream open reading frame (uORF) in their 5' UTR, such as ATF4, ATF5, DDIT3/CHOP and PPP1R15A/GADD34. Its function is as follows. Member of the eIF2 complex that functions in the early steps of protein synthesis by forming a ternary complex with GTP and initiator tRNA. This complex binds to a 40S ribosomal subunit, followed by mRNA binding to form a 43S pre-initiation complex. Junction of the 60S ribosomal subunit to form the 80S initiation complex is preceded by hydrolysis of the GTP bound to eIF2 and release of an eIF2-GDP binary complex. In order for eIF2 to recycle and catalyze another round of initiation, the GDP bound to eIF2 must exchange with GTP by way of a reaction catalyzed by eIF2B. EIF2S1/eIF2-alpha is a key component of the integrated stress response (ISR), required for adaptation to various stress: phosphorylation by metabolic-stress sensing protein kinases (EIF2AK1/HRI, EIF2AK2/PKR, EIF2AK3/PERK and EIF2AK4/GCN2) in response to stress converts EIF2S1/eIF2-alpha in a global protein synthesis inhibitor, leading to a attenuation of cap-dependent translation, while concomitantly initiating the preferential translation of ISR-specific mRNAs, such as the transcriptional activators ATF4 and QRICH1, and hence allowing ATF4- and QRICH1-mediated reprogramming. EIF2S1/eIF2-alpha also acts as an activator of mitophagy in response to mitochondrial damage: phosphorylation by EIF2AK1/HRI promotes relocalization to the mitochondrial surface, thereby triggering PRKN-independent mitophagy. This Oryctolagus cuniculus (Rabbit) protein is Eukaryotic translation initiation factor 2 subunit 1 (EIF2S1).